Consider the following 745-residue polypeptide: Arf-GAP with coiled-coil, ANK repeat and PH domain-containing protein 1 (745 aa).

One can recognise a BAR domain in the interval 1–226; the sequence is MTVKLDFEEC…RKELGGQLHQ (226 aa). The required for formation of endosomal tubules when overexpressed with PIP5K1C stretch occupies residues 1-382; that stretch reads MTVKLDFEEC…RGLGQGSGHL (382 aa). In terms of domain architecture, PH spans 265–360; it reads GLVMEGHLFK…WVSAVQSSIA (96 aa). In terms of domain architecture, Arf-GAP spans 405–527; that stretch reads GHVAAQVQSV…KFLTKLPEIR (123 aa). The interval 405-745 is required for interaction with GULP1; the sequence is GHVAAQVQSV…SRRSHDLHTL (341 aa). The C4-type zinc-finger motif lies at 420-443; sequence CCDCREPAPEWASINLGVTLCIQC. Tyrosine 485 carries the post-translational modification 3'-nitrotyrosine. A prevents interaction with ITGB1 when S-554 is not phosphorylated region spans residues 525–567; that stretch reads EIRGRRGGRGPPRGHPPVPPKPGLIRPKPGSFRSKPEPPSEDL. The interval 525-569 is disordered; sequence EIRGRRGGRGPPRGHPPVPPKPGLIRPKPGSFRSKPEPPSEDLQS. The segment covering 537–546 has biased composition (pro residues); the sequence is RGHPPVPPKP. Residue serine 555 is modified to Phosphoserine; by PKB. ANK repeat units lie at residues 607–640, 644–673, and 677–707; these read ENATPLIQATAAVRVLNSLLACEFLLQNGANVNQ, QGRGPLHHATILGHTGLACLFLKRGADLGV, and EGRDPLTIAVETANADIVTLLRLAKMREADA.

As to quaternary structure, banana-shaped homodimer laterally assembling into tetramers, the tetramers further pack helically onto the membrane. Interacts with GTP-bound ARF6. Interacts with third cytoplasmic loop of SLC2A4/GLUT4. Interacts with CLTC. Interacts with GULP1. Forms a complex with GDP-bound ARF6 and GULP1. Interacts with ITGB1; required for ITGB1 recycling. In terms of processing, phosphorylation at Ser-555 by PKB is required for interaction with ITGB1, export of ITGB1 from recycling endosomes to the cell surface and ITGB1-dependent cell migration.

It localises to the recycling endosome membrane. With respect to regulation, GAP activity stimulated by phosphatidylinositol 4,5-bisphosphate (PIP2) and phosphatidic acid. GTPase-activating protein (GAP) for ADP ribosylation factor 6 (ARF6) required for clathrin-dependent export of proteins from recycling endosomes to trans-Golgi network and cell surface. Required for regulated export of ITGB1 from recycling endosomes to the cell surface and ITGB1-dependent cell migration. The protein is Arf-GAP with coiled-coil, ANK repeat and PH domain-containing protein 1 (ACAP1) of Bos taurus (Bovine).